We begin with the raw amino-acid sequence, 462 residues long: Coagulation factor IX (462 aa).

An N-terminal signal peptide occupies residues 1 to 21 (MADAPGLIPIFLLGYLLSTEC). Positions 22 to 39 (AVFLDRENATKILTRPKR) are excised as a propeptide. 11 residues coordinate Ca(2+): Tyr40, Asn41, Glu46, Glu47, Glu54, Glu56, Glu59, Glu60, Glu65, Glu66, and Glu69. The region spanning 40–86 (YNSGKLEEFVQGNLERECIEERCSFEEAREVFENTEKTTEFWKQYVD) is the Gla domain. 4-carboxyglutamate occurs at positions 46, 47, 54, 56, 59, 60, 65, 66, 69, 72, and 75. Glu54 is a binding site for Mg(2+). The cysteines at positions 57 and 62 are disulfide-linked. Glu59 provides a ligand contact to Mg(2+). Glu65 serves as a coordination point for Mg(2+). Position 69 (Glu69) interacts with Mg(2+). A Ca(2+)-binding site is contributed by Glu75. Residue Glu75 coordinates Mg(2+). Thr78 carries O-linked (GalNAc...) threonine glycosylation. Ca(2+) contacts are provided by Glu79, Asp86, Gly87, and Gln89. Glu79 bears the 4-carboxyglutamate mark. Residue Glu79 participates in Mg(2+) binding. In terms of domain architecture, EGF-like; calcium-binding spans 86-122 (DGDQCESNPCLNGGICKDDINSYECWCQAGFEGRNCE). 10 cysteine pairs are disulfide-bonded: Cys90–Cys101, Cys95–Cys110, Cys112–Cys121, Cys127–Cys138, Cys134–Cys148, Cys150–Cys163, Cys171–Cys336, Cys253–Cys269, Cys383–Cys397, and Cys408–Cys436. Ser92 is a glycosylation site (O-linked (Glc...) serine). Positions 103 and 104 each coordinate Ca(2+). The residue at position 103 (Asp103) is a (3R)-3-hydroxyaspartate. The residue at position 107 (Ser107) is a Phosphoserine. Residues 186–227 (AETVFSNTDYGNSTELILDDITNSTILDNLTENSEPINDFTR) constitute a propeptide, activation peptide. At Tyr195 the chain carries Sulfotyrosine. Ser198 carries the phosphoserine modification. The residue at position 199 (Thr199) is a Phosphothreonine; alternate. Thr199 carries O-linked (GalNAc...) threonine; alternate glycosylation. Asn208 and Asn214 each carry an N-linked (GlcNAc...) asparagine glycan. 2 O-linked (GalNAc...) threonine glycosylation sites follow: Thr216 and Thr226. The region spanning 228-460 (VVGGENAKPG…YVNWIKEKTK (233 aa)) is the Peptidase S1 domain. The active-site Charge relay system is His268. Ca(2+) contacts are provided by Glu282, Asn284, Glu287, Glu289, and Glu292. N-linked (GlcNAc...) asparagine glycosylation is present at Asn307. Asp316 functions as the Charge relay system in the catalytic mechanism. The active-site Charge relay system is Ser412.

It belongs to the peptidase S1 family. As to quaternary structure, heterodimer of a light chain and a heavy chain; disulfide-linked. Interacts (inactive and activated) with F11 (activated) in calcium-dependent manner. Interacts with SERPINC1. Interacts (inactive and activated) with nitrophorin-2, an anticoagulant protein from Rhodnius prolixus. Post-translationally, activated by factor XIa, which excises the activation peptide. The propeptide can also be removed by snake venom protease. Activated by coagulation factor VIIa-tissue factor (F7-F3) complex in calcium-dependent manner. The iron and 2-oxoglutarate dependent 3-hydroxylation of aspartate and asparagine is (R) stereospecific within EGF domains. In terms of processing, predominantly O-glucosylated at Ser-92 by POGLUT1 in vitro.

Its subcellular location is the secreted. It catalyses the reaction Selective cleavage of Arg-|-Ile bond in factor X to form factor Xa.. Functionally, factor IX is a vitamin K-dependent plasma protein that participates in the intrinsic pathway of blood coagulation by converting factor X to its active form in the presence of Ca(2+) ions, phospholipids, and factor VIIIa. In Rattus norvegicus (Rat), this protein is Coagulation factor IX (F9).